The primary structure comprises 856 residues: Leucine--tRNA ligase (856 aa).

A 'HIGH' region motif is present at residues 53-63 (PYPSGNLHMGH). A 'KMSKS' region motif is present at residues 622-626 (KMSKS). Lysine 625 contacts ATP.

This sequence belongs to the class-I aminoacyl-tRNA synthetase family.

Its subcellular location is the cytoplasm. It carries out the reaction tRNA(Leu) + L-leucine + ATP = L-leucyl-tRNA(Leu) + AMP + diphosphate. The polypeptide is Leucine--tRNA ligase (Prochlorococcus marinus (strain MIT 9215)).